A 327-amino-acid polypeptide reads, in one-letter code: Zinc transport protein ZntB (327 aa).

Residues 1-271 (METIYGSSLK…AMNRRTYTMS (271 aa)) are Cytoplasmic-facing. The chain crosses the membrane as a helical span at residues 272-292 (LLAMIFLPTTFLTGLFGVNLG). Topologically, residues 293 to 300 (GIPGNEYY) are periplasmic. A helical transmembrane segment spans residues 301-321 (LGFAIFCLLLFGLVLFVAWWL). Over 322-327 (KKSKWL) the chain is Cytoplasmic.

This sequence belongs to the CorA metal ion transporter (MIT) (TC 1.A.35) family.

The protein localises to the cell inner membrane. It catalyses the reaction Zn(2+)(out) + H(+)(out) = Zn(2+)(in) + H(+)(in). Zinc transporter. Acts as a Zn(2+):proton symporter, which likely mediates zinc ion uptake. The polypeptide is Zinc transport protein ZntB (Photorhabdus laumondii subsp. laumondii (strain DSM 15139 / CIP 105565 / TT01) (Photorhabdus luminescens subsp. laumondii)).